The chain runs to 341 residues: Uroporphyrinogen decarboxylase (341 aa).

Residues 26–30 (RQAGR), Asp-75, Tyr-150, Ser-205, and His-318 each bind substrate.

It belongs to the uroporphyrinogen decarboxylase family. In terms of assembly, homodimer.

It localises to the cytoplasm. The catalysed reaction is uroporphyrinogen III + 4 H(+) = coproporphyrinogen III + 4 CO2. The protein operates within porphyrin-containing compound metabolism; protoporphyrin-IX biosynthesis; coproporphyrinogen-III from 5-aminolevulinate: step 4/4. In terms of biological role, catalyzes the decarboxylation of four acetate groups of uroporphyrinogen-III to yield coproporphyrinogen-III. The protein is Uroporphyrinogen decarboxylase of Thermus thermophilus (strain ATCC BAA-163 / DSM 7039 / HB27).